Reading from the N-terminus, the 174-residue chain is Crossover junction endodeoxyribonuclease RuvC (174 aa).

Residues D8, E69, and D141 contribute to the active site. Mg(2+)-binding residues include D8, E69, and D141.

It belongs to the RuvC family. Homodimer which binds Holliday junction (HJ) DNA. The HJ becomes 2-fold symmetrical on binding to RuvC with unstacked arms; it has a different conformation from HJ DNA in complex with RuvA. In the full resolvosome a probable DNA-RuvA(4)-RuvB(12)-RuvC(2) complex forms which resolves the HJ. It depends on Mg(2+) as a cofactor.

The protein localises to the cytoplasm. It catalyses the reaction Endonucleolytic cleavage at a junction such as a reciprocal single-stranded crossover between two homologous DNA duplexes (Holliday junction).. Its function is as follows. The RuvA-RuvB-RuvC complex processes Holliday junction (HJ) DNA during genetic recombination and DNA repair. Endonuclease that resolves HJ intermediates. Cleaves cruciform DNA by making single-stranded nicks across the HJ at symmetrical positions within the homologous arms, yielding a 5'-phosphate and a 3'-hydroxyl group; requires a central core of homology in the junction. The consensus cleavage sequence is 5'-(A/T)TT(C/G)-3'. Cleavage occurs on the 3'-side of the TT dinucleotide at the point of strand exchange. HJ branch migration catalyzed by RuvA-RuvB allows RuvC to scan DNA until it finds its consensus sequence, where it cleaves and resolves the cruciform DNA. This Xanthomonas campestris pv. campestris (strain 8004) protein is Crossover junction endodeoxyribonuclease RuvC.